Here is a 302-residue protein sequence, read N- to C-terminus: tRNA pseudouridine synthase B (302 aa).

D45 serves as the catalytic Nucleophile.

Belongs to the pseudouridine synthase TruB family. Type 1 subfamily.

The catalysed reaction is uridine(55) in tRNA = pseudouridine(55) in tRNA. Responsible for synthesis of pseudouridine from uracil-55 in the psi GC loop of transfer RNAs. This is tRNA pseudouridine synthase B from Francisella tularensis subsp. tularensis (strain FSC 198).